The chain runs to 357 residues: NADPH HC-toxin reductase 1 (357 aa).

Residues R40, K47, 68-69, 88-90, Y178, K182, 207-210, and T222 each bind NADP(+); these read DL, VAT, and LGLV. Catalysis depends on K182, which acts as the Proton donor.

It belongs to the NAD(P)-dependent epimerase/dehydratase family.

Its activity is regulated as follows. Activity is sensitive to heat, dependent on NADPH, and inhibited by p-hydroxymercuribenzoate and disulfiram. In tandem with Hm2, NADPH-dependent Helminthosporium carbonum (HC) toxin reductase (HCTR), which inactivates HC toxin, a cyclic tetrapeptide produced by the fungus Cochliobolus carbonum to permit infection and acting as an inhibitor of host histone deacetylases (HDACs), thus conferring resistance against C.carbonum race 1 in resistant cultivars (e.g. cv. B73 and cv. Wisconsin 22). Catalyzes the production of 8-hydroxy derivative of HC-toxin via the reduction of the 8-keto group of 2-amino-9,10-epoxy-8-oxo-decanoic acid, an amino acid of the HC-toxin. This is NADPH HC-toxin reductase 1 from Zea mays (Maize).